Consider the following 236-residue polypeptide: Phosphoribosylaminoimidazole-succinocarboxamide synthase (236 aa).

This sequence belongs to the SAICAR synthetase family.

It carries out the reaction 5-amino-1-(5-phospho-D-ribosyl)imidazole-4-carboxylate + L-aspartate + ATP = (2S)-2-[5-amino-1-(5-phospho-beta-D-ribosyl)imidazole-4-carboxamido]succinate + ADP + phosphate + 2 H(+). It functions in the pathway purine metabolism; IMP biosynthesis via de novo pathway; 5-amino-1-(5-phospho-D-ribosyl)imidazole-4-carboxamide from 5-amino-1-(5-phospho-D-ribosyl)imidazole-4-carboxylate: step 1/2. The polypeptide is Phosphoribosylaminoimidazole-succinocarboxamide synthase (Streptococcus equi subsp. zooepidemicus (strain MGCS10565)).